Here is a 195-residue protein sequence, read N- to C-terminus: GTP cyclohydrolase 1 (195 aa).

3 residues coordinate Zn(2+): cysteine 85, histidine 88, and cysteine 157.

The protein belongs to the GTP cyclohydrolase I family. Toroid-shaped homodecamer, composed of two pentamers of five dimers.

It catalyses the reaction GTP + H2O = 7,8-dihydroneopterin 3'-triphosphate + formate + H(+). Its pathway is cofactor biosynthesis; 7,8-dihydroneopterin triphosphate biosynthesis; 7,8-dihydroneopterin triphosphate from GTP: step 1/1. The chain is GTP cyclohydrolase 1 from Clostridium acetobutylicum (strain ATCC 824 / DSM 792 / JCM 1419 / IAM 19013 / LMG 5710 / NBRC 13948 / NRRL B-527 / VKM B-1787 / 2291 / W).